A 253-amino-acid polypeptide reads, in one-letter code: Probable transcriptional regulatory protein Mlut_12910 (253 aa).

The protein belongs to the TACO1 family.

Its subcellular location is the cytoplasm. In Micrococcus luteus (strain ATCC 4698 / DSM 20030 / JCM 1464 / CCM 169 / CCUG 5858 / IAM 1056 / NBRC 3333 / NCIMB 9278 / NCTC 2665 / VKM Ac-2230) (Micrococcus lysodeikticus), this protein is Probable transcriptional regulatory protein Mlut_12910.